Reading from the N-terminus, the 202-residue chain is Peptide deformylase (202 aa).

The segment at 1-24 is disordered; it reads MAGSFAQLAKNAEKKKPSISVSKE. Fe cation contacts are provided by C121 and H163. Residue E164 is part of the active site. Fe cation is bound at residue H167.

This sequence belongs to the polypeptide deformylase family. Fe(2+) is required as a cofactor.

It catalyses the reaction N-terminal N-formyl-L-methionyl-[peptide] + H2O = N-terminal L-methionyl-[peptide] + formate. Its function is as follows. Removes the formyl group from the N-terminal Met of newly synthesized proteins. Requires at least a dipeptide for an efficient rate of reaction. N-terminal L-methionine is a prerequisite for activity but the enzyme has broad specificity at other positions. The protein is Peptide deformylase of Prochlorococcus marinus (strain NATL2A).